Here is a 211-residue protein sequence, read N- to C-terminus: Large ribosomal subunit protein uL3 (211 aa).

Residues 122 to 147 form a disordered region; the sequence is AIKRHGQSRGPMAHGSRYHRRPGSMG.

This sequence belongs to the universal ribosomal protein uL3 family. In terms of assembly, part of the 50S ribosomal subunit. Forms a cluster with proteins L14 and L19.

Its function is as follows. One of the primary rRNA binding proteins, it binds directly near the 3'-end of the 23S rRNA, where it nucleates assembly of the 50S subunit. The protein is Large ribosomal subunit protein uL3 of Geobacillus sp. (strain WCH70).